The sequence spans 333 residues: Fructose-1,6-bisphosphatase class 1 (333 aa).

Mg(2+)-binding residues include Glu-92, Asp-113, Leu-115, and Asp-116. Substrate contacts are provided by residues Asp-116–Ser-119, Asn-209, Tyr-242, and Lys-272. Glu-278 is a binding site for Mg(2+).

This sequence belongs to the FBPase class 1 family. Homotetramer. Requires Mg(2+) as cofactor.

It localises to the cytoplasm. It carries out the reaction beta-D-fructose 1,6-bisphosphate + H2O = beta-D-fructose 6-phosphate + phosphate. The protein operates within carbohydrate biosynthesis; Calvin cycle. The polypeptide is Fructose-1,6-bisphosphatase class 1 (Chlorobaculum parvum (strain DSM 263 / NCIMB 8327) (Chlorobium vibrioforme subsp. thiosulfatophilum)).